Here is a 103-residue protein sequence, read N- to C-terminus: Co-chaperonin GroES (103 aa).

The protein belongs to the GroES chaperonin family. Heptamer of 7 subunits arranged in a ring. Interacts with the chaperonin GroEL.

It is found in the cytoplasm. Functionally, together with the chaperonin GroEL, plays an essential role in assisting protein folding. The GroEL-GroES system forms a nano-cage that allows encapsulation of the non-native substrate proteins and provides a physical environment optimized to promote and accelerate protein folding. GroES binds to the apical surface of the GroEL ring, thereby capping the opening of the GroEL channel. This Dinoroseobacter shibae (strain DSM 16493 / NCIMB 14021 / DFL 12) protein is Co-chaperonin GroES.